A 156-amino-acid chain; its full sequence is 2-C-methyl-D-erythritol 2,4-cyclodiphosphate synthase (156 aa).

Residues D10 and H12 each contribute to the a divalent metal cation site. Residues 10–12 (DSH) and 36–37 (HS) each bind 4-CDP-2-C-methyl-D-erythritol 2-phosphate. A divalent metal cation is bound at residue H44. 4-CDP-2-C-methyl-D-erythritol 2-phosphate contacts are provided by residues 58–60 (DIG) and 63–67 (FKDTD).

The protein belongs to the IspF family. Homotrimer. A divalent metal cation is required as a cofactor.

The catalysed reaction is 4-CDP-2-C-methyl-D-erythritol 2-phosphate = 2-C-methyl-D-erythritol 2,4-cyclic diphosphate + CMP. The protein operates within isoprenoid biosynthesis; isopentenyl diphosphate biosynthesis via DXP pathway; isopentenyl diphosphate from 1-deoxy-D-xylulose 5-phosphate: step 4/6. Functionally, involved in the biosynthesis of isopentenyl diphosphate (IPP) and dimethylallyl diphosphate (DMAPP), two major building blocks of isoprenoid compounds. Catalyzes the conversion of 4-diphosphocytidyl-2-C-methyl-D-erythritol 2-phosphate (CDP-ME2P) to 2-C-methyl-D-erythritol 2,4-cyclodiphosphate (ME-CPP) with a corresponding release of cytidine 5-monophosphate (CMP). This chain is 2-C-methyl-D-erythritol 2,4-cyclodiphosphate synthase, found in Aquifex aeolicus (strain VF5).